Here is a 240-residue protein sequence, read N- to C-terminus: tRNA1(Val) (adenine(37)-N6)-methyltransferase (240 aa).

This sequence belongs to the methyltransferase superfamily. tRNA (adenine-N(6)-)-methyltransferase family.

It localises to the cytoplasm. The catalysed reaction is adenosine(37) in tRNA1(Val) + S-adenosyl-L-methionine = N(6)-methyladenosine(37) in tRNA1(Val) + S-adenosyl-L-homocysteine + H(+). Specifically methylates the adenine in position 37 of tRNA(1)(Val) (anticodon cmo5UAC). The chain is tRNA1(Val) (adenine(37)-N6)-methyltransferase from Photobacterium profundum (strain SS9).